Reading from the N-terminus, the 380-residue chain is 1-deoxy-D-xylulose 5-phosphate reductoisomerase (380 aa).

Ser-10, Gly-11, Ser-12, Ile-13, Gly-36, Lys-37, Asn-38, and Asn-120 together coordinate NADPH. 1-deoxy-D-xylulose 5-phosphate is bound at residue Lys-121. Glu-122 serves as a coordination point for NADPH. Asp-146 serves as a coordination point for Mn(2+). The 1-deoxy-D-xylulose 5-phosphate site is built by Ser-147, Glu-148, Ser-172, and His-195. Residue Glu-148 participates in Mn(2+) binding. Gly-201 contacts NADPH. Residues Ser-208, Asn-213, Lys-214, and Glu-217 each coordinate 1-deoxy-D-xylulose 5-phosphate. Glu-217 is a binding site for Mn(2+).

This sequence belongs to the DXR family. Requires Mg(2+) as cofactor. Mn(2+) serves as cofactor.

It carries out the reaction 2-C-methyl-D-erythritol 4-phosphate + NADP(+) = 1-deoxy-D-xylulose 5-phosphate + NADPH + H(+). The protein operates within isoprenoid biosynthesis; isopentenyl diphosphate biosynthesis via DXP pathway; isopentenyl diphosphate from 1-deoxy-D-xylulose 5-phosphate: step 1/6. Functionally, catalyzes the NADPH-dependent rearrangement and reduction of 1-deoxy-D-xylulose-5-phosphate (DXP) to 2-C-methyl-D-erythritol 4-phosphate (MEP). This is 1-deoxy-D-xylulose 5-phosphate reductoisomerase from Bacillus cereus (strain Q1).